The chain runs to 128 residues: DNA-directed RNA polymerase subunit omega (128 aa).

Belongs to the RNA polymerase subunit omega family. As to quaternary structure, the RNAP catalytic core consists of 2 alpha, 1 beta, 1 beta' and 1 omega subunit. When a sigma factor is associated with the core the holoenzyme is formed, which can initiate transcription.

The enzyme catalyses RNA(n) + a ribonucleoside 5'-triphosphate = RNA(n+1) + diphosphate. In terms of biological role, promotes RNA polymerase assembly. Latches the N- and C-terminal regions of the beta' subunit thereby facilitating its interaction with the beta and alpha subunits. This chain is DNA-directed RNA polymerase subunit omega, found in Neorickettsia sennetsu (strain ATCC VR-367 / Miyayama) (Ehrlichia sennetsu).